Reading from the N-terminus, the 109-residue chain is Oncomodulin (109 aa).

S2 is subject to N-acetylserine. EF-hand domains are found at residues 39–74 and 78–109; these read MSAS…FQSD and LTES…MVHS. Ca(2+) contacts are provided by D52, D54, S56, Y58, E63, D91, D93, D95, K97, and E102.

It belongs to the parvalbumin family. In terms of tissue distribution, found in tumor tissues and not detected in normal tissues.

Its function is as follows. Has some calmodulin-like activity with respect to enzyme activation and growth regulation. Binds two calcium ions. The polypeptide is Oncomodulin (Ocm) (Rattus norvegicus (Rat)).